The chain runs to 316 residues: Small ribosomal subunit biogenesis GTPase RsgA (316 aa).

A CP-type G domain is found at 83 to 248; that stretch reads DQYKSKLFAA…LIDSPGFQEF (166 aa). Residues 131-134 and 185-193 each bind GTP; these read NKTD and GQSGMGKST. Cys272, Cys277, His279, and Cys285 together coordinate Zn(2+).

This sequence belongs to the TRAFAC class YlqF/YawG GTPase family. RsgA subfamily. In terms of assembly, monomer. Associates with 30S ribosomal subunit, binds 16S rRNA. Zn(2+) serves as cofactor.

Its subcellular location is the cytoplasm. Functionally, one of several proteins that assist in the late maturation steps of the functional core of the 30S ribosomal subunit. Helps release RbfA from mature subunits. May play a role in the assembly of ribosomal proteins into the subunit. Circularly permuted GTPase that catalyzes slow GTP hydrolysis, GTPase activity is stimulated by the 30S ribosomal subunit. This is Small ribosomal subunit biogenesis GTPase RsgA from Paraburkholderia xenovorans (strain LB400).